Here is a 121-residue protein sequence, read N- to C-terminus: Darcynin homolog (121 aa).

Belongs to the darcynin family.

The protein is Darcynin homolog of Streptomyces avermitilis (strain ATCC 31267 / DSM 46492 / JCM 5070 / NBRC 14893 / NCIMB 12804 / NRRL 8165 / MA-4680).